The chain runs to 243 residues: Urease accessory protein UreF (243 aa).

It belongs to the UreF family. UreD, UreF and UreG form a complex that acts as a GTP-hydrolysis-dependent molecular chaperone, activating the urease apoprotein by helping to assemble the nickel containing metallocenter of UreC. The UreE protein probably delivers the nickel.

The protein resides in the cytoplasm. In terms of biological role, required for maturation of urease via the functional incorporation of the urease nickel metallocenter. This is Urease accessory protein UreF from Rhodopseudomonas palustris (strain BisB5).